Here is a 167-residue protein sequence, read N- to C-terminus: MGITHELDIFVTNEDLALKNIELFKGNSYGCFINLKVKEEKRFNMIFVLRPDWSEIDSVKPIRMTVNNNHVDVEKVSESIHEVVYSASFLISFNSLVKVFSDDPDKYKNVYPTVTINVPKKKFKVVDQGNTYMFIQYPIDDCDKERFLKDEFKYCDNEYDQYNDCDE.

The protein belongs to the poxviridae C7 protein family.

Plays a role for multiplication of the virus in different cell types. In Yaba monkey tumor virus (strain VR587) (YMTV), this protein is Probable host range protein 2.